The following is a 412-amino-acid chain: Keratin, type I microfibrillar 48 kDa, component 8C-1 (412 aa).

Residue serine 1 is modified to N-acetylserine. Residues 1–55 (SFNFCLPNLSFRSSCSSRPCVPSSCCGTTLPGACNIPANVGSCNWFCEGSFDGNE) are head. One can recognise an IF rod domain in the interval 55–366 (EKETMQFLND…GLLDSEDCKL (312 aa)). The tract at residues 56–90 (KETMQFLNDRLASYLEKVRQLERENAELESRILER) is coil 1A. The tract at residues 91-101 (SQQQEPLVCPN) is linker 1. The coil 1B stretch occupies residues 102–202 (YQSYFRTIEE…HEEEVNTLRS (101 aa)). The linker 12 stretch occupies residues 203 to 218 (QLGDRLNVEVDAAPTV). Positions 219–362 (DLNRVLNETR…NTYRGLLDSE (144 aa)) are coil 2. The tract at residues 363–412 (DCKLPCNPCATTNACGKTITPCISSPCAPAAPCTPCVPRSRCGPCNSYVR) is tail.

The protein belongs to the intermediate filament family.

In terms of biological role, wool microfibrillar keratin. In Ovis aries (Sheep), this protein is Keratin, type I microfibrillar 48 kDa, component 8C-1.